We begin with the raw amino-acid sequence, 224 residues long: Ribosome maturation factor RimP (224 aa).

The interval 194–224 (REGRIPGDDLGSEEAGEQSDETASGEAEDKE) is disordered. The segment covering 203–213 (LGSEEAGEQSD) has biased composition (acidic residues).

This sequence belongs to the RimP family.

The protein localises to the cytoplasm. Required for maturation of 30S ribosomal subunits. This Brucella anthropi (strain ATCC 49188 / DSM 6882 / CCUG 24695 / JCM 21032 / LMG 3331 / NBRC 15819 / NCTC 12168 / Alc 37) (Ochrobactrum anthropi) protein is Ribosome maturation factor RimP.